Consider the following 262-residue polypeptide: Homeobox protein Nkx-6.3 (262 aa).

The segment at residues 140 to 199 (KKHTRPTFTGHQIFALEKTFEQTKYLAGPERARLAYSLGMTESQVKVWFQNRRTKWRKKS) is a DNA-binding region (homeobox). The interval 197-237 (KKSALEPSSSTPRAPGGASGDRAASENEDDEYNKPLDPDSD) is disordered.

As to expression, expressed in the developing CNS and gastro-intestinal tract.

The protein resides in the nucleus. In terms of biological role, putative transcription factor, which may be involved in patterning of central nervous system and pancreas. The polypeptide is Homeobox protein Nkx-6.3 (Nkx6-3) (Mus musculus (Mouse)).